The chain runs to 51 residues: uncharacterized protein (51 aa).

This is an uncharacterized protein from Enterobacteria phage T4 (Bacteriophage T4).